The sequence spans 99 residues: UPF0235 protein HS_1657 (99 aa).

It belongs to the UPF0235 family.

This Histophilus somni (strain 129Pt) (Haemophilus somnus) protein is UPF0235 protein HS_1657.